Reading from the N-terminus, the 223-residue chain is Ribonuclease T (223 aa).

Positions 20–194 (VVIDVETAGF…YDTERTAELF (175 aa)) constitute an Exonuclease domain. Mg(2+) contacts are provided by D23, E25, H181, and D186. The active-site Proton donor/acceptor is H181.

It belongs to the RNase T family. In terms of assembly, homodimer. Requires Mg(2+) as cofactor.

Trims short 3' overhangs of a variety of RNA species, leaving a one or two nucleotide 3' overhang. Responsible for the end-turnover of tRNA: specifically removes the terminal AMP residue from uncharged tRNA (tRNA-C-C-A). Also appears to be involved in tRNA biosynthesis. This is Ribonuclease T from Shewanella baltica (strain OS185).